A 220-amino-acid chain; its full sequence is Inner membrane-spanning protein YciB (220 aa).

6 helical membrane-spanning segments follow: residues 20 to 40, 57 to 77, 86 to 106, 123 to 143, 156 to 176, and 187 to 207; these read EVPPLLKLALELGPLLVFFFA, IGAPIFLATALFMGATVIALA, LPIMPLVSGIVVLVFGALTLW, LFGAILLGGLFFGKSLLGYVF, KLTLRWGLFFIFLAVVNEVVW, and FKVWGIMPITIVFTLLQMPLI.

It belongs to the YciB family.

The protein localises to the cell inner membrane. Plays a role in cell envelope biogenesis, maintenance of cell envelope integrity and membrane homeostasis. The sequence is that of Inner membrane-spanning protein YciB from Brucella anthropi (strain ATCC 49188 / DSM 6882 / CCUG 24695 / JCM 21032 / LMG 3331 / NBRC 15819 / NCTC 12168 / Alc 37) (Ochrobactrum anthropi).